The following is a 198-amino-acid chain: Thioredoxin reductase-like selenoprotein T homolog CG3887 (198 aa).

A signal peptide spans M1 to A25. C49 and C52 are oxidised to a cystine.

This sequence belongs to the SelWTH family. SELT subfamily.

The catalysed reaction is [thioredoxin]-dithiol + NADP(+) = [thioredoxin]-disulfide + NADPH + H(+). Its function is as follows. Probably has thioredoxin reductase-like oxidoreductase activity. The sequence is that of Thioredoxin reductase-like selenoprotein T homolog CG3887 from Drosophila melanogaster (Fruit fly).